A 246-amino-acid polypeptide reads, in one-letter code: Pyridoxine 5'-phosphate synthase (246 aa).

N7 contributes to the 3-amino-2-oxopropyl phosphate binding site. 9–10 (DH) is a 1-deoxy-D-xylulose 5-phosphate binding site. Residue R18 participates in 3-amino-2-oxopropyl phosphate binding. Catalysis depends on H43, which acts as the Proton acceptor. Residues R45 and H50 each contribute to the 1-deoxy-D-xylulose 5-phosphate site. The active-site Proton acceptor is E70. Residue T100 coordinates 1-deoxy-D-xylulose 5-phosphate. The active-site Proton donor is the H190. 3-amino-2-oxopropyl phosphate is bound by residues G191 and 212 to 213 (GH).

Belongs to the PNP synthase family. In terms of assembly, homooctamer; tetramer of dimers.

It localises to the cytoplasm. It carries out the reaction 3-amino-2-oxopropyl phosphate + 1-deoxy-D-xylulose 5-phosphate = pyridoxine 5'-phosphate + phosphate + 2 H2O + H(+). It functions in the pathway cofactor biosynthesis; pyridoxine 5'-phosphate biosynthesis; pyridoxine 5'-phosphate from D-erythrose 4-phosphate: step 5/5. Catalyzes the complicated ring closure reaction between the two acyclic compounds 1-deoxy-D-xylulose-5-phosphate (DXP) and 3-amino-2-oxopropyl phosphate (1-amino-acetone-3-phosphate or AAP) to form pyridoxine 5'-phosphate (PNP) and inorganic phosphate. The chain is Pyridoxine 5'-phosphate synthase from Prochlorococcus marinus (strain SARG / CCMP1375 / SS120).